A 487-amino-acid chain; its full sequence is Probable Xaa-Pro aminopeptidase CPSG_02684 (487 aa).

A compositionally biased stretch (polar residues) spans 1-10; it reads MAGSNTLSSS. Residues 1–22 form a disordered region; that stretch reads MAGSNTLSSSEHGDDPRGHSYS. Positions 275, 286, 421, and 460 each coordinate Mn(2+).

This sequence belongs to the peptidase M24B family. Requires Mn(2+) as cofactor.

The catalysed reaction is Release of any N-terminal amino acid, including proline, that is linked to proline, even from a dipeptide or tripeptide.. In terms of biological role, catalyzes the removal of a penultimate prolyl residue from the N-termini of peptides. The chain is Probable Xaa-Pro aminopeptidase CPSG_02684 from Coccidioides posadasii (strain RMSCC 757 / Silveira) (Valley fever fungus).